Here is a 207-residue protein sequence, read N- to C-terminus: Fibroblast growth factor 18 (207 aa).

The first 27 residues, Met1–Ala27, serve as a signal peptide directing secretion. Asn39 carries an N-linked (GlcNAc...) asparagine glycan. Residues Cys109 and Cys127 are joined by a disulfide bond. N-linked (GlcNAc...) asparagine glycosylation is present at Asn137. The tract at residues Gly157 to Gln186 is disordered. Residues Lys164 to Phe174 show a composition bias toward basic and acidic residues.

It belongs to the heparin-binding growth factors family. Interacts with FGFR3 and FGFR4.

The protein localises to the secreted. In terms of biological role, plays an important role in the regulation of cell proliferation, cell differentiation and cell migration. Required for normal ossification and bone development. Stimulates hepatic and intestinal proliferation. This chain is Fibroblast growth factor 18 (FGF18), found in Homo sapiens (Human).